The primary structure comprises 231 residues: Cytidylate kinase (231 aa).

Residue 11 to 19 (GHSSCGKST) participates in ATP binding.

The protein belongs to the cytidylate kinase family. Type 1 subfamily.

Its subcellular location is the cytoplasm. The catalysed reaction is CMP + ATP = CDP + ADP. The enzyme catalyses dCMP + ATP = dCDP + ADP. The chain is Cytidylate kinase from Porphyromonas gingivalis (strain ATCC BAA-308 / W83).